Here is a 358-residue protein sequence, read N- to C-terminus: tRNA pseudouridine synthase D (358 aa).

The active-site Nucleophile is the Asp84. The TRUD domain maps to Gly161–Asp312.

Belongs to the pseudouridine synthase TruD family.

It catalyses the reaction uridine(13) in tRNA = pseudouridine(13) in tRNA. In terms of biological role, responsible for synthesis of pseudouridine from uracil-13 in transfer RNAs. The polypeptide is tRNA pseudouridine synthase D (Nitrosococcus oceani (strain ATCC 19707 / BCRC 17464 / JCM 30415 / NCIMB 11848 / C-107)).